The primary structure comprises 1523 residues: Lysophospholipase nte1 (1523 aa).

Residues 1-66 (MADGVTLVDS…LPPVPTTMAG (66 aa)) lie on the Cytoplasmic side of the membrane. Residues 67 to 87 (WIGWVFSFFFQVIPSVLYWVI) form a helical membrane-spanning segment. The Lumenal portion of the chain corresponds to 88–109 (TFSTITLPTWLFTLFSMSLTFT). The helical transmembrane segment at 110–130 (MNFTTLLLIVLAMVSTISWFI) threads the bilayer. Over 131–1523 (RYRFLNMYSR…RTMAPRRASI (1393 aa)) the chain is Cytoplasmic. Disordered regions lie at residues 309-384 (VPNS…KSVH) and 524-545 (RAAT…GVSP). Basic residues predominate over residues 370–382 (ESRKHSSRKRRKS). A nucleoside 3',5'-cyclic phosphate-binding positions include 681-800 (GGTS…GAVA) and 841-961 (RLTS…IAQR). The PNPLA domain occupies 1220–1384 (LVLGGGGARG…IDNLTVDHMK (165 aa)). Residues 1224 to 1229 (GGGARG) carry the GXGXXG motif. The short motif at 1251-1255 (GTSIG) is the GXSXG element. Serine 1253 serves as the catalytic Nucleophile. The active-site Proton acceptor is aspartate 1371. A DGA/G motif is present at residues 1371–1373 (DGG). A disordered region spans residues 1502-1523 (LPEETEEKKKLQRTMAPRRASI).

Belongs to the NTE family.

It localises to the endoplasmic reticulum membrane. It carries out the reaction a 1-acyl-sn-glycero-3-phosphocholine + H2O = sn-glycerol 3-phosphocholine + a fatty acid + H(+). Its activity is regulated as follows. Inhibited by organophosphorus esters. In terms of biological role, intracellular phospholipase B that catalyzes the double deacylation of phosphatidylcholine (PC) to glycerophosphocholine (GroPCho). Plays an important role in membrane lipid homeostasis. Responsible for the rapid PC turnover in response to inositol, elevated temperatures, or when choline is present in the growth medium. This is Lysophospholipase nte1 (nte1) from Neosartorya fischeri (strain ATCC 1020 / DSM 3700 / CBS 544.65 / FGSC A1164 / JCM 1740 / NRRL 181 / WB 181) (Aspergillus fischerianus).